The following is a 123-amino-acid chain: Beta-2-microglobulin (123 aa).

The signal sequence occupies residues 1 to 21; sequence MSRLFLFALLGHLCFLPYLDA. Residues 29–118 enclose the Ig-like C1-type domain; it reads PRVQVYSRYP…STLNEPKVVK (90 aa). A disulfide bond links Cys-49 and Cys-104.

This sequence belongs to the beta-2-microglobulin family. In terms of assembly, heterodimer of an alpha chain and a beta chain. Beta-2-microglobulin is the beta-chain of major histocompatibility complex class I molecules.

The protein localises to the secreted. Functionally, component of the class I major histocompatibility complex (MHC). Involved in the presentation of peptide antigens to the immune system. In Monodelphis domestica (Gray short-tailed opossum), this protein is Beta-2-microglobulin (B2M).